A 120-amino-acid polypeptide reads, in one-letter code: uncharacterized protein (120 aa).

The RING-type zinc finger occupies 70–109; that stretch reads CARCRRSLTLTPAVSCLPCGHSCLCTDCDQLFANVCFECK.

This is an uncharacterized protein from Orgyia pseudotsugata multicapsid polyhedrosis virus (OpMNPV).